The primary structure comprises 206 residues: uncharacterized protein (206 aa).

Disordered regions lie at residues 38–88 and 160–206; these read RLQQ…NKNA and HQNT…SVQE. Low complexity predominate over residues 40–73; that stretch reads QQQQQQQQQQQQNRTASSLQQPQQQQPISPPLFL. At serine 68 the chain carries Phosphoserine. The segment covering 78–88 has biased composition (polar residues); sequence TSENSNLNKNA. Residues 165-186 are compositionally biased toward low complexity; the sequence is SSSNPGSMSSSPPNSASSIFNS. Polar residues predominate over residues 192-206; sequence PYTSQSFNPLESVQE.

The protein localises to the cytoplasm. This is an uncharacterized protein from Saccharomyces cerevisiae (strain ATCC 204508 / S288c) (Baker's yeast).